Consider the following 474-residue polypeptide: GTPase Der (474 aa).

EngA-type G domains lie at 2–166 (LRIA…NVPE) and 212–385 (LKIA…TTVS). GTP is bound by residues 8–15 (GRPNVGKS), 55–59 (DTGGV), 118–121 (NKAD), 218–225 (GRPNVGKS), 265–269 (DTAGL), and 330–333 (NKWD). The KH-like domain maps to 386-470 (SKVPTPVVNK…PFDLEFKEKT (85 aa)).

This sequence belongs to the TRAFAC class TrmE-Era-EngA-EngB-Septin-like GTPase superfamily. EngA (Der) GTPase family. As to quaternary structure, associates with the 50S ribosomal subunit.

In terms of biological role, GTPase that plays an essential role in the late steps of ribosome biogenesis. This Chlamydia abortus (strain DSM 27085 / S26/3) (Chlamydophila abortus) protein is GTPase Der.